A 582-amino-acid polypeptide reads, in one-letter code: Aspartate--tRNA ligase (582 aa).

An L-aspartate-binding site is contributed by Glu174. The interval 198-201 (QITK) is aspartate. Arg220 lines the L-aspartate pocket. Residues 220–222 (RDE) and Gln229 contribute to the ATP site. His443 provides a ligand contact to L-aspartate. Glu477 lines the ATP pocket. Arg484 provides a ligand contact to L-aspartate. 529–532 (GLDR) lines the ATP pocket.

It belongs to the class-II aminoacyl-tRNA synthetase family. Type 1 subfamily. Homodimer.

It is found in the cytoplasm. It catalyses the reaction tRNA(Asp) + L-aspartate + ATP = L-aspartyl-tRNA(Asp) + AMP + diphosphate. Its function is as follows. Catalyzes the attachment of L-aspartate to tRNA(Asp) in a two-step reaction: L-aspartate is first activated by ATP to form Asp-AMP and then transferred to the acceptor end of tRNA(Asp). This chain is Aspartate--tRNA ligase, found in Streptococcus equi subsp. zooepidemicus (strain MGCS10565).